The following is a 342-amino-acid chain: S-adenosylmethionine:tRNA ribosyltransferase-isomerase (342 aa).

Belongs to the QueA family. As to quaternary structure, monomer.

Its subcellular location is the cytoplasm. It carries out the reaction 7-aminomethyl-7-carbaguanosine(34) in tRNA + S-adenosyl-L-methionine = epoxyqueuosine(34) in tRNA + adenine + L-methionine + 2 H(+). It functions in the pathway tRNA modification; tRNA-queuosine biosynthesis. Functionally, transfers and isomerizes the ribose moiety from AdoMet to the 7-aminomethyl group of 7-deazaguanine (preQ1-tRNA) to give epoxyqueuosine (oQ-tRNA). In Streptococcus agalactiae serotype V (strain ATCC BAA-611 / 2603 V/R), this protein is S-adenosylmethionine:tRNA ribosyltransferase-isomerase.